The chain runs to 357 residues: Serine protease 1 (357 aa).

An N-terminal signal peptide occupies residues 1 to 29 (MRRTTRARTGLSALLLAASLGLGAAPAGA). Residues 30-170 (DAPQRPAPTP…TRVPGVFQRE (141 aa)) constitute a propeptide that is removed on maturation. Cys184 and Cys204 are joined by a disulfide. Active-site charge relay system residues include His203, Asp232, and Ser313. Cys307 and Cys333 are disulfide-bonded.

It belongs to the peptidase S1 family.

The protein localises to the secreted. Functionally, serine protease that preferentially cleaves peptide bonds on the C-terminal side of aspartate and glutamate with a 10-fold higher reactivity for a glutamyl bond than an aspartyl bond. The protein is Serine protease 1 of Streptomyces fradiae (Streptomyces roseoflavus).